We begin with the raw amino-acid sequence, 351 residues long: Protein RecA (351 aa).

68–75 (GPESSGKT) contacts ATP.

The protein belongs to the RecA family.

The protein resides in the cytoplasm. Can catalyze the hydrolysis of ATP in the presence of single-stranded DNA, the ATP-dependent uptake of single-stranded DNA by duplex DNA, and the ATP-dependent hybridization of homologous single-stranded DNAs. It interacts with LexA causing its activation and leading to its autocatalytic cleavage. The chain is Protein RecA from Chloroflexus aurantiacus (strain ATCC 29364 / DSM 637 / Y-400-fl).